A 151-amino-acid chain; its full sequence is Deoxyuridine 5'-triphosphate nucleotidohydrolase (151 aa).

Residues 70–72, asparagine 83, 87–89, and methionine 97 each bind substrate; these read RSG and LID.

It belongs to the dUTPase family. Mg(2+) is required as a cofactor.

It carries out the reaction dUTP + H2O = dUMP + diphosphate + H(+). It functions in the pathway pyrimidine metabolism; dUMP biosynthesis; dUMP from dCTP (dUTP route): step 2/2. Its function is as follows. This enzyme is involved in nucleotide metabolism: it produces dUMP, the immediate precursor of thymidine nucleotides and it decreases the intracellular concentration of dUTP so that uracil cannot be incorporated into DNA. The chain is Deoxyuridine 5'-triphosphate nucleotidohydrolase from Pseudomonas fluorescens (strain ATCC BAA-477 / NRRL B-23932 / Pf-5).